We begin with the raw amino-acid sequence, 354 residues long: DNA polymerase IV (354 aa).

In terms of domain architecture, UmuC spans Ile-6–Gly-187. Mg(2+) contacts are provided by Asp-10 and Asp-105. Glu-106 is an active-site residue.

Belongs to the DNA polymerase type-Y family. In terms of assembly, monomer. Mg(2+) is required as a cofactor.

It is found in the cytoplasm. The catalysed reaction is DNA(n) + a 2'-deoxyribonucleoside 5'-triphosphate = DNA(n+1) + diphosphate. Functionally, poorly processive, error-prone DNA polymerase involved in untargeted mutagenesis. Copies undamaged DNA at stalled replication forks, which arise in vivo from mismatched or misaligned primer ends. These misaligned primers can be extended by PolIV. Exhibits no 3'-5' exonuclease (proofreading) activity. May be involved in translesional synthesis, in conjunction with the beta clamp from PolIII. This chain is DNA polymerase IV, found in Pseudomonas putida (strain ATCC 47054 / DSM 6125 / CFBP 8728 / NCIMB 11950 / KT2440).